The primary structure comprises 147 residues: D-aminoacyl-tRNA deacylase (147 aa).

The Gly-cisPro motif, important for rejection of L-amino acids motif lies at 137–138; it reads GP.

Belongs to the DTD family. Homodimer.

The protein localises to the cytoplasm. It carries out the reaction glycyl-tRNA(Ala) + H2O = tRNA(Ala) + glycine + H(+). The enzyme catalyses a D-aminoacyl-tRNA + H2O = a tRNA + a D-alpha-amino acid + H(+). In terms of biological role, an aminoacyl-tRNA editing enzyme that deacylates mischarged D-aminoacyl-tRNAs. Also deacylates mischarged glycyl-tRNA(Ala), protecting cells against glycine mischarging by AlaRS. Acts via tRNA-based rather than protein-based catalysis; rejects L-amino acids rather than detecting D-amino acids in the active site. By recycling D-aminoacyl-tRNA to D-amino acids and free tRNA molecules, this enzyme counteracts the toxicity associated with the formation of D-aminoacyl-tRNA entities in vivo and helps enforce protein L-homochirality. This Acinetobacter baumannii (strain AYE) protein is D-aminoacyl-tRNA deacylase.